Reading from the N-terminus, the 353-residue chain is Stearoyl-CoA desaturase 4 (353 aa).

The disordered stretch occupies residues 1–42; the sequence is MTAHLPQEISSRCSTTNIMEPHSRRQQDGEEKMPLQAEDIRP. Topologically, residues 1 to 66 are cytoplasmic; the sequence is MTAHLPQEIS…EGPPPKLEYV (66 aa). Residues 8–18 are compositionally biased toward polar residues; sequence EISSRCSTTNI. Basic and acidic residues predominate over residues 21-42; it reads PHSRRQQDGEEKMPLQAEDIRP. A helical transmembrane segment spans residues 67–87; sequence WRNIIFMALLHVGALYGITLV. N69 contributes to the substrate binding site. At 88–91 the chain is on the lumenal side; the sequence is PSCK. The chain crosses the membrane as a helical span at residues 92-112; that stretch reads VYTWLLGVFYNVVAGLGITAG. Topologically, residues 113–211 are cytoplasmic; that stretch reads AHRLWSHRTY…EKLVMFQRRY (99 aa). H114 and H119 together coordinate Fe cation. The Histidine box-1 signature appears at 114-119; that stretch reads HRLWSH. Residues N142, R149, and D150 each contribute to the substrate site. Fe cation is bound by residues H151, H154, and H155. The Histidine box-2 signature appears at 151 to 155; sequence HRAHH. Substrate-binding residues include R182 and K183. Residues 212-231 form a helical membrane-spanning segment; it reads YKLAVTLMFIILPTLVPWYL. At 232–235 the chain is on the lumenal side; sequence WGET. Residues 236–257 form a helical membrane-spanning segment; that stretch reads FQHSLCVSNFLRYAVLLNFTWL. Position 256 (W256) interacts with substrate. The Cytoplasmic segment spans residues 258 to 353; that stretch reads VNSAAHLYGY…RTGDGSHKSS (96 aa). Fe cation is bound by residues H263, H292, H295, and H296. The Histidine box-3 motif lies at 292 to 296; that stretch reads HNYHH.

The protein belongs to the fatty acid desaturase type 1 family. It depends on Fe(2+) as a cofactor. As to expression, detected in heart, but not in brain, liver, skin or adipose tissue.

Its subcellular location is the endoplasmic reticulum membrane. It localises to the microsome membrane. It catalyses the reaction octadecanoyl-CoA + 2 Fe(II)-[cytochrome b5] + O2 + 2 H(+) = (9Z)-octadecenoyl-CoA + 2 Fe(III)-[cytochrome b5] + 2 H2O. The catalysed reaction is hexadecanoyl-CoA + 2 Fe(II)-[cytochrome b5] + O2 + 2 H(+) = (9Z)-hexadecenoyl-CoA + 2 Fe(III)-[cytochrome b5] + 2 H2O. In terms of biological role, stearoyl-CoA desaturase that utilizes O(2) and electrons from reduced cytochrome b5 to introduce the first double bond into saturated fatty acyl-CoA substrates. Catalyzes the insertion of a cis double bond at the delta-9 position into fatty acyl-CoA substrates including palmitoyl-CoA and stearoyl-CoA. Required for the biosynthesis of membrane phospholipids, cholesterol esters and triglycerides. This Mus musculus (Mouse) protein is Stearoyl-CoA desaturase 4.